A 183-amino-acid polypeptide reads, in one-letter code: Holliday junction branch migration complex subunit RuvA (183 aa).

The interval 1–64 (MVVGIEGIIT…EDSNKFYGFL (64 aa)) is domain I. The tract at residues 65–139 (DKDEQKMFEM…DTRTKLENVS (75 aa)) is domain II. A region of interest (flexible linker) is located at residue serine 139. A domain III region spans residues 139-183 (SDDKSEALAALLTLGFKQEKIISVLASAQATGTSELIKEALKKLR).

This sequence belongs to the RuvA family. Homotetramer. Forms an RuvA(8)-RuvB(12)-Holliday junction (HJ) complex. HJ DNA is sandwiched between 2 RuvA tetramers; dsDNA enters through RuvA and exits via RuvB. An RuvB hexamer assembles on each DNA strand where it exits the tetramer. Each RuvB hexamer is contacted by two RuvA subunits (via domain III) on 2 adjacent RuvB subunits; this complex drives branch migration. In the full resolvosome a probable DNA-RuvA(4)-RuvB(12)-RuvC(2) complex forms which resolves the HJ.

Its subcellular location is the cytoplasm. The RuvA-RuvB-RuvC complex processes Holliday junction (HJ) DNA during genetic recombination and DNA repair, while the RuvA-RuvB complex plays an important role in the rescue of blocked DNA replication forks via replication fork reversal (RFR). RuvA specifically binds to HJ cruciform DNA, conferring on it an open structure. The RuvB hexamer acts as an ATP-dependent pump, pulling dsDNA into and through the RuvAB complex. HJ branch migration allows RuvC to scan DNA until it finds its consensus sequence, where it cleaves and resolves the cruciform DNA. The polypeptide is Holliday junction branch migration complex subunit RuvA (Campylobacter jejuni subsp. doylei (strain ATCC BAA-1458 / RM4099 / 269.97)).